The primary structure comprises 115 residues: U3-lycotoxin-Ls1a (115 aa).

The signal sequence occupies residues 1 to 20 (MKFVLLFGVLLLTLFSYSSA). A propeptide spanning residues 21 to 44 (EMLDDFDQADEDELLSLIEKEEAR) is cleaved from the precursor. 4 cysteine pairs are disulfide-bonded: Cys-48-Cys-63, Cys-55-Cys-72, Cys-62-Cys-87, and Cys-74-Cys-85.

The protein belongs to the neurotoxin 19 (CSTX) family. 01 subfamily. As to expression, expressed by the venom gland.

It is found in the secreted. The sequence is that of U3-lycotoxin-Ls1a from Lycosa singoriensis (Wolf spider).